Reading from the N-terminus, the 91-residue chain is Small ribosomal subunit protein bS6 (91 aa).

It belongs to the bacterial ribosomal protein bS6 family.

Binds together with bS18 to 16S ribosomal RNA. The protein is Small ribosomal subunit protein bS6 of Leptospira interrogans serogroup Icterohaemorrhagiae serovar copenhageni (strain Fiocruz L1-130).